The chain runs to 405 residues: Sarcosine oxidase subunit beta (405 aa).

FAD is bound by residues G31, H32, E53, N61, M62, T66, and I68. Position 173 is a tele-8alpha-FMN histidine (H173). 4 residues coordinate FAD: V197, G354, G357, and K359.

Belongs to the SoxB family. In terms of assembly, heterotetramer composed of subunits alpha (SoxA), beta (SoxB), gamma (SoxG) and delta (SoxD). FAD serves as cofactor. FMN is required as a cofactor.

It localises to the cytoplasm. The catalysed reaction is sarcosine + (6S)-5,6,7,8-tetrahydrofolate + O2 = (6R)-5,10-methylene-5,6,7,8-tetrahydrofolate + glycine + H2O2. It catalyses the reaction sarcosine + O2 + H2O = formaldehyde + glycine + H2O2. In terms of biological role, in the presence of tetrahydrofolate, catalyzes the oxidative demethylation of sarcosine to yield glycine, 5,10-methylenetetrahydrofolate and hydrogen peroxide. In the absence of tetrahydrofolate, catalyzes the oxidative demethylation of sarcosine to yield glycine, formaldehyde and hydrogen peroxide. This Arthrobacter sp protein is Sarcosine oxidase subunit beta (soxB).